The following is a 252-amino-acid chain: MADGFWNRQQQHLPPPGGMLKRPRTEYDTAPSGVTSGNEVHNYIAQNNGHQMLNDTKILGSAYDRFLQSAGLTSFNSGEASVIGGVGFARGVGELPGHSLGDPSAMGHLSGVGGGPDLSRNGRDVNFGGQLPIDAVSRPGPETIPLPRDASSTLYVEGLPSDSTKREVAHIFRPFVGYREVRLVAKESKHRGGDPLILCFVDFANPACAATALSALQGYKVDEINPESSYLRLQFSRSPGRRSGGPGPRGKR.

Disordered regions lie at residues 1–34 (MADGFWNRQQQHLPPPGGMLKRPRTEYDTAPSGV) and 232–252 (RLQFSRSPGRRSGGPGPRGKR). One can recognise an RRM domain in the interval 152–238 (STLYVEGLPS…SYLRLQFSRS (87 aa)). A compositionally biased stretch (gly residues) spans 242–252 (RSGGPGPRGKR).

In terms of biological role, probable RNA-binding protein. The polypeptide is RNA-binding protein 2 (Medicago truncatula (Barrel medic)).